Here is a 357-residue protein sequence, read N- to C-terminus: Neutral protease 2 homolog UREG_02006 (357 aa).

An N-terminal signal peptide occupies residues 1–19; it reads MLFSSRFLALAALLGQALA. A propeptide spanning residues 20–179 is cleaved from the precursor; the sequence is LPIDDFSQSD…QSAVPTIEKR (160 aa). Cystine bridges form between Cys-187–Cys-259 and Cys-266–Cys-284. His-308 serves as a coordination point for Zn(2+). Glu-309 is an active-site residue. The Zn(2+) site is built by His-312 and Asp-323.

This sequence belongs to the peptidase M35 family. The cofactor is Zn(2+).

The protein resides in the secreted. It catalyses the reaction Preferential cleavage of bonds with hydrophobic residues in P1'. Also 3-Asn-|-Gln-4 and 8-Gly-|-Ser-9 bonds in insulin B chain.. Its function is as follows. Secreted metalloproteinase that allows assimilation of proteinaceous substrates. Shows high activities on basic nuclear substrates such as histone and protamine. This is Neutral protease 2 homolog UREG_02006 from Uncinocarpus reesii (strain UAMH 1704).